The following is a 496-amino-acid chain: Protein TOO MANY MOUTHS (496 aa).

The N-terminal stretch at 1–23 is a signal peptide; sequence MARYEFFRQIFIVLSIVSPLVRS. The Extracellular portion of the chain corresponds to 24–473; the sequence is FTVITSDSTA…ATDVSSTSKS (450 aa). LRR repeat units follow at residues 158–182, 183–208, 210–228, 229–252, 254–276, 277–300, 302–325, 326–350, 351–373, and 375–401; these read GSSLQTLVLRENGFLGPIPDELGNL, TNLKVLDLHKNHLNGSIPLSFNRFSG, RSLDLSGNRLTGSIPGFVL, PALSVLDLNQNLLTGPVPPTLTSC, SLIKIDLSRNRVTGPIPESINRL, NQLVLLDLSYNRLSGPFPSSLQGL, SLQALMLKGNTKFSTTIPENAFKG, LKNLMILVLSNTNIQGSIPKSLTRL, NSLRVLHLEGNNLTGEIPLEFRD, and KHLSELRLNDNSLTGPVPFERDTVWRM. N-linked (GlcNAc...) asparagine glycosylation is found at asparagine 181 and asparagine 196. An N-linked (GlcNAc...) asparagine glycan is attached at asparagine 362. Positions 438-464 are disordered; it reads AETSRPAPSGTVQHLSREEDGALPDGA. A helical transmembrane segment spans residues 474–494; it reads LGFSYLSAFFLVFPNFIFMLI. Residues 495–496 lie on the Cytoplasmic side of the membrane; the sequence is SS.

Belongs to the RLP family. As to quaternary structure, forms heterodimer with ERECTA or ERL1 through their extracellular domains. Not able to form homodimer. Interacts with EPF2 but not with EPF1. Interacts with SERK1, SERK2, SERK3/BAK1 and SERK4. Interacts with EPFL9/STOMAGEN. In epidermal cells of developing shoots and leaves, but not in roots. Expressed in the stomatal cell lineage in the developing epidermis. Accumulates strongly in meristemoid mother cells (MMC) and meristemoids, somewhat less in meristemoid sister cells (stomatal-lineage ground cells, SLGC), and is barely detected in pavement cells.

It localises to the cell membrane. Its function is as follows. Promotes cell fate progression in stomatal development. In leaves, needed to correctly orient spacing divisions, to limit the number of asymmetric divisions in neighbor cells, and to promote the asymmetric (amplifying) divisions of meristemoids. In stems, promotes the conversion of meristemoids into guard mother cells (GMC). Positively regulates CAPRICE (CPC) expression in differentiating stomaless-forming cell files. Forms constitutive complexes with ERECTA and ERL1 involved in the recognition of the stomatal regulatory peptides EPF1, EPF2 and EPFL9/STOMAGEN. Modulates the activity of the ligand-receptor pairs EPF2-ERECTA and EPF1-ERL1 in stomatal development. Functions in a combinatorial specific manner with the ERECTA-family (ERf) receptor kinases in the regulation of the immune response. The protein is Protein TOO MANY MOUTHS of Arabidopsis thaliana (Mouse-ear cress).